The sequence spans 668 residues: tRNA 5-methylaminomethyl-2-thiouridine biosynthesis bifunctional protein MnmC (668 aa).

The interval 1-245 (MKHYSIQPAN…KREMLCGVME (245 aa)) is tRNA (mnm(5)s(2)U34)-methyltransferase. Positions 270 to 668 (IGGGIACALL…LLKGKAVKAG (399 aa)) are FAD-dependent cmnm(5)s(2)U34 oxidoreductase.

It in the N-terminal section; belongs to the methyltransferase superfamily. tRNA (mnm(5)s(2)U34)-methyltransferase family. In the C-terminal section; belongs to the DAO family. FAD is required as a cofactor.

It localises to the cytoplasm. The catalysed reaction is 5-aminomethyl-2-thiouridine(34) in tRNA + S-adenosyl-L-methionine = 5-methylaminomethyl-2-thiouridine(34) in tRNA + S-adenosyl-L-homocysteine + H(+). Its function is as follows. Catalyzes the last two steps in the biosynthesis of 5-methylaminomethyl-2-thiouridine (mnm(5)s(2)U) at the wobble position (U34) in tRNA. Catalyzes the FAD-dependent demodification of cmnm(5)s(2)U34 to nm(5)s(2)U34, followed by the transfer of a methyl group from S-adenosyl-L-methionine to nm(5)s(2)U34, to form mnm(5)s(2)U34. This chain is tRNA 5-methylaminomethyl-2-thiouridine biosynthesis bifunctional protein MnmC, found in Shigella boydii serotype 18 (strain CDC 3083-94 / BS512).